A 674-amino-acid chain; its full sequence is Multifunctional alkene reductase/demethylase OYE (674 aa).

Residues G62 and Q105 each coordinate FMN. H175 acts as the Proton donor in catalysis. Positions 223 and 299 each coordinate FMN. Positions 345, 351, and 358 each coordinate [4Fe-4S] cluster. A391, Q418, and R428 together coordinate FAD.

In the N-terminal section; belongs to the NADH:flavin oxidoreductase/NADH oxidase family. It depends on [4Fe-4S] cluster as a cofactor. FAD is required as a cofactor. Requires FMN as cofactor.

The catalysed reaction is 3-phenylpropanoate + NAD(+) = (E)-cinnamate + NADH + H(+). The enzyme catalyses N-methyl-L-proline + NAD(+) + H2O = L-proline + formaldehyde + NADH + H(+). Functionally, a member of the 2-enoate reductase subfamily of old yellow enzymes (OYE) able to reduce alpha/beta alkenes near electron-withdrawing groups as well as perform oxidative demethylation chemistry. Prefers NADH over NADPH as cosubstrate. May play a role in osmotic stress response in situ. This Caballeronia cordobensis (Burkholderia cordobensis) protein is Multifunctional alkene reductase/demethylase OYE.